The sequence spans 1761 residues: Laminin subunit beta-4 (1761 aa).

The first 19 residues, 1–19 (MQFQLTLFLHLGWLSYSKA), serve as a signal peptide directing secretion. The Laminin N-terminal domain maps to 24–264 (NRGACHPTTG…ALYEMIVRGS (241 aa)). 3 N-linked (GlcNAc...) asparagine glycosylation sites follow: Asn169, Asn229, and Asn246. Disulfide bonds link Cys265–Cys274, Cys267–Cys295, Cys297–Cys306, Cys309–Cys329, Cys332–Cys341, Cys334–Cys359, Cys362–Cys371, Cys374–Cys392, Cys395–Cys408, Cys397–Cys423, Cys425–Cys434, Cys437–Cys452, Cys455–Cys468, Cys457–Cys475, Cys477–Cys486, Cys489–Cys503, Cys506–Cys518, Cys508–Cys525, and Cys527–Cys536. 4 consecutive Laminin EGF-like domains span residues 265-331 (CFCN…ACRS), 332-394 (CSCN…ACIP), 395-454 (CECD…GCQP), and 455-505 (CDCN…GCSP). The 47-residue stretch at 506–552 (CDCDIGGAYSNVCSPKNGQCECRPHVTGRSCSEPAPGYFFAPLNFYL) folds into the Laminin EGF-like 5; truncated domain. The region spanning 545 to 763 (FAPLNFYLYE…LIISMSAKLH (219 aa)) is the Laminin IV type B domain. 31 cysteine pairs are disulfide-bonded: Cys769/Cys781, Cys771/Cys788, Cys790/Cys799, Cys802/Cys814, Cys817/Cys829, Cys819/Cys836, Cys838/Cys847, Cys850/Cys860, Cys863/Cys872, Cys865/Cys879, Cys882/Cys891, Cys894/Cys908, Cys913/Cys938, Cys940/Cys949, Cys952/Cys967, Cys970/Cys984, Cys972/Cys991, Cys994/Cys1003, Cys1006/Cys1019, Cys1022/Cys1043, Cys1024/Cys1050, Cys1052/Cys1061, Cys1064/Cys1077, Cys1080/Cys1092, Cys1082/Cys1099, Cys1101/Cys1110, Cys1113/Cys1125, Cys1128/Cys1140, Cys1130/Cys1147, Cys1149/Cys1158, and Cys1161/Cys1172. Laminin EGF-like domains follow at residues 769–816 (CKCH…GCHP), 817–862 (CHCH…SCHP), 863–910 (CPCN…PCRP), 911–969 (CLCP…PCQP), 970–1021 (CACN…TCRR), 1022–1079 (CSCH…GCQS), 1080–1127 (CDCD…RCIP), and 1128–1174 (CDCN…TCLQ). The N-linked (GlcNAc...) asparagine glycan is linked to Asn1016. Asn1055 carries an N-linked (GlcNAc...) asparagine glycan. Residues 1175-1375 (CHLCFDQWDH…PDIQILNEKV (201 aa)) are domain II. N-linked (GlcNAc...) asparagine glycans are attached at residues Asn1223, Asn1301, Asn1326, Asn1333, and Asn1354. Residues 1243–1301 (KVKDYHDSVRRQIMQLNEQLKAVYEFQDLKDTIERAKNEADLLLEDLQEEIDLQSSVLN) are a coiled coil. The interval 1376–1408 (CGDPGNVPCVPLPCGGALCTGRKGHRKCRGPGC) is domain alpha. The segment at 1409–1761 (HGSLTLSTNA…QEKKYARCYS (353 aa)) is domain I. A coiled-coil region spans residues 1416–1480 (TNALQKAQEA…SDSEEENINL (65 aa)). N-linked (GlcNAc...) asparagine glycans are attached at residues Asn1469, Asn1517, Asn1587, Asn1596, Asn1609, and Asn1725. Residues 1525-1759 (IQKHMQLCED…VEQEKKYARC (235 aa)) adopt a coiled-coil conformation.

In terms of assembly, laminin is a complex glycoprotein, consisting of three different polypeptide chains (alpha, beta, gamma), which are bound to each other by disulfide bonds into a cross-shaped molecule comprising one long and three short arms with globules at each end.

It is found in the secreted. It localises to the extracellular space. The protein resides in the extracellular matrix. The protein localises to the basement membrane. Its function is as follows. Binding to cells via a high affinity receptor, laminin is thought to mediate the attachment, migration and organization of cells into tissues during embryonic development by interacting with other extracellular matrix components. The protein is Laminin subunit beta-4 (LAMB4) of Homo sapiens (Human).